Consider the following 187-residue polypeptide: MPRVVPDQRSKFENEEFFRKLSRECEIKYTGFRDRPHEERQTRFQNACRDGRSEIAFVATGTNLSLQFFPASWQGEQRQTPSREYVDLEREAGKVYLKAPMILNGVCVIWKGWIDLHRLDGMGCLEFDEERAQQEDALAQQAFEEARRRTREFEDRDRSHREEMEARRQQDPSPGSNLGGGDDLKLR.

Phosphoserine; by CK2 is present on serine 10. The interval 139–187 (AQQAFEEARRRTREFEDRDRSHREEMEARRQQDPSPGSNLGGGDDLKLR) is disordered. Residues 144-170 (EEARRRTREFEDRDRSHREEMEARRQQ) show a composition bias toward basic and acidic residues. Position 159 is a phosphoserine; by PKC (serine 159).

It belongs to the CBF-beta family. Heterodimer with RUNX1, RUNX2 and RUNX3. Interacts with COPRS. Found in a complex with PRMT5 and RUNX1. In terms of tissue distribution, expressed in all tissues tested. Highest level in thymus, but also abundantly expressed in muscle, lung and brain.

Its subcellular location is the nucleus. In terms of biological role, forms the heterodimeric complex core-binding factor (CBF) with RUNX family proteins (RUNX1, RUNX2, and RUNX3). RUNX members modulate the transcription of their target genes through recognizing the core consensus binding sequence 5'-TGTGGT-3', or very rarely, 5'-TGCGGT-3', within their regulatory regions via their runt domain, while CBFB is a non-DNA-binding regulatory subunit that allosterically enhances the sequence-specific DNA-binding capacity of RUNX. The heterodimers bind to the core site of a number of enhancers and promoters, including murine leukemia virus, polyomavirus enhancer, T-cell receptor enhancers, LCK, IL3 and GM-CSF promoters. CBF complexes repress ZBTB7B transcription factor during cytotoxic (CD8+) T cell development. They bind to RUNX-binding sequence within the ZBTB7B locus acting as transcriptional silencer and allowing for cytotoxic T cell differentiation. This Mus musculus (Mouse) protein is Core-binding factor subunit beta (Cbfb).